The sequence spans 762 residues: Semaphorin-4A (762 aa).

The signal sequence occupies residues 1–32; that stretch reads MALPALGLDSWSFLGLFLFQLLLLFLPPATTA. The Extracellular portion of the chain corresponds to 33–684; the sequence is GREGQGPTPR…LAAPKSYWPH (652 aa). The region spanning 37-495 is the Sema domain; it reads QGPTPRVKYH…FSGGIWKVPR (459 aa). A disulfide bond links Cys114 and Cys125. N-linked (GlcNAc...) asparagine glycans are attached at residues Asn121 and Asn136. 3 disulfide bridges follow: Cys143-Cys152, Cys270-Cys380, and Cys294-Cys340. N-linked (GlcNAc...) asparagine glycosylation is found at Asn314 and Asn497. Residues 497–544 enclose the PSI domain; it reads NCSVYESCMDCVLARDPHCAWDPESQTCRLLPTPILKSWKQDMQQGNP. 2 cysteine pairs are disulfide-bonded: Cys498/Cys515 and Cys507/Cys524. Residues 574-632 form the Ig-like C2-type domain; it reads NSILELPCPQSSALASYHWSHGVEAIPEAPSTVYNGSLLLLLRDGAGGLYQCWATENDF. Asn608 carries an N-linked (GlcNAc...) asparagine glycan. A helical membrane pass occupies residues 685–705; that stretch reads FLTVTVLLALVLSGALVTFLV. Over 706-762 the chain is Cytoplasmic; sequence SPLGALRARGKVQGCGTLPSREKAPLSSEQCLQPSKEGRTSASDMDADNNLQGTEVA. The segment at 722–762 is disordered; that stretch reads TLPSREKAPLSSEQCLQPSKEGRTSASDMDADNNLQGTEVA.

This sequence belongs to the semaphorin family. As to quaternary structure, interacts with PLXNB1, PLXNB2, PLXNB3, PLXND1 and TIMD2.

Its subcellular location is the cell membrane. Its function is as follows. Cell surface receptor for PLXNB1, PLXNB2, PLXNB3 and PLXND1 that plays an important role in cell-cell signaling. Regulates glutamatergic and GABAergic synapse development. Promotes the development of inhibitory synapses in a PLXNB1-dependent manner and promotes the development of excitatory synapses in a PLXNB2-dependent manner. Plays a role in priming antigen-specific T-cells, promotes differentiation of Th1 T-helper cells, and thereby contributes to adaptive immunity. Promotes phosphorylation of TIMD2. Inhibits angiogenesis. Promotes axon growth cone collapse. Inhibits axonal extension by providing local signals to specify territories inaccessible for growing axons. The protein is Semaphorin-4A (SEMA4A) of Bos taurus (Bovine).